Reading from the N-terminus, the 184-residue chain is MPTFDTTKQIFLCGLPSVGKTSFGRLLAQFLSLPFFDTDHLLSARFHGDSPKAIYQRFGEEGFCQEELLTLINLPVIPSVVALGGKTLLDKQIYEHITQRENILLVLLDLPFATLYQRLQKKPLPESLKNTPSLENALFQRLEKLRLLTPHIFSLQAATSLHEIGEVCQSFCLQFLTAQEIPYA.

ATP is bound at residue 17-22 (SVGKTS). Thr-21 contacts Mg(2+). Positions 39 and 85 each coordinate substrate.

It belongs to the shikimate kinase family. As to quaternary structure, monomer. Mg(2+) is required as a cofactor.

It localises to the cytoplasm. It catalyses the reaction shikimate + ATP = 3-phosphoshikimate + ADP + H(+). The protein operates within metabolic intermediate biosynthesis; chorismate biosynthesis; chorismate from D-erythrose 4-phosphate and phosphoenolpyruvate: step 5/7. Its function is as follows. Catalyzes the specific phosphorylation of the 3-hydroxyl group of shikimic acid using ATP as a cosubstrate. In Chlamydia muridarum (strain MoPn / Nigg), this protein is Shikimate kinase.